The sequence spans 1195 residues: Phosphatidylinositol-3,5-bisphosphate 3-phosphatase MTMR4 (1195 aa).

At serine 8 the chain carries Phosphoserine. In terms of domain architecture, Myotubularin phosphatase spans glutamate 153 to tyrosine 570. Residues asparagine 320, asparagine 345, and isoleucine 346 each coordinate a 1,2-diacyl-sn-glycero-3-phospho-(1D-myo-inositol-3,5-bisphosphate). Positions 320, 345, and 346 each coordinate a 1,2-diacyl-sn-glycero-3-phospho-(1D-myo-inositol-3-phosphate). Cysteine 407 functions as the Phosphocysteine intermediate in the catalytic mechanism. A 1,2-diacyl-sn-glycero-3-phospho-(1D-myo-inositol-3,5-bisphosphate) contacts are provided by serine 408, aspartate 409, glycine 410, tryptophan 411, aspartate 412, arginine 413, lysine 449, and arginine 453. The a 1,2-diacyl-sn-glycero-3-phospho-(1D-myo-inositol-3-phosphate) site is built by serine 408, aspartate 409, glycine 410, tryptophan 411, aspartate 412, and arginine 413. Arginine 453 lines the a 1,2-diacyl-sn-glycero-3-phospho-(1D-myo-inositol-3-phosphate) pocket. 2 positions are modified to phosphoserine: serine 610 and serine 629. Disordered regions lie at residues glutamate 645–proline 756, glutamate 780–glycine 800, and aspartate 827–asparagine 877. The segment covering proline 720–lysine 729 has biased composition (basic and acidic residues). Polar residues-rich tracts occupy residues glutamate 780–proline 795 and aspartate 831–proline 854. The short motif at valine 1004–tyrosine 1008 is the PY-motif; substrate motif for NEDD4 element. Positions histidine 1023–cysteine 1055 form a coiled coil. Residues aspartate 1114–glutamine 1174 form an FYVE-type zinc finger. Residues cysteine 1120, cysteine 1123, cysteine 1136, cysteine 1139, cysteine 1144, cysteine 1147, cysteine 1166, and cysteine 1169 each contribute to the Zn(2+) site.

It belongs to the protein-tyrosine phosphatase family. Non-receptor class myotubularin subfamily. Homooligomeric. Forms MTMR3:MTMR4 heterooligomers; regulates the localization of both proteins. The MTMR3:MTMR4 heterooligomer can also recruit both CEP55 and PLK1; occurs during early mitosis, regulates the phosphorylation of CEP55 by PLK1 and its recruitment to the midbody where it can mediate cell abscission. Interacts with SMAD2 and SMAD3; negatively regulates TGF-beta signaling through SMAD2 and SMAD3 dephosphorylation and retention in endosomes. Interacts with SMAD1; negatively regulates BMP signaling through SMAD1 dephosphorylation and retention in endosomes. Ubiquitinated. Ubiquitination by NEDD4 probably leads to proteasomal degradation. In terms of processing, phosphorylated by CDK1 during mitosis. Expressed in brain, heart, kidney, spleen, liver, colon, testis, muscle, placenta, thyroid gland, pancreas, ovary, prostate, skin, peripheral blood, and bone marrow.

It localises to the early endosome membrane. It is found in the recycling endosome membrane. The protein localises to the late endosome membrane. The protein resides in the cytoplasmic vesicle. Its subcellular location is the phagosome membrane. The catalysed reaction is a 1,2-diacyl-sn-glycero-3-phospho-(1D-myo-inositol-3-phosphate) + H2O = a 1,2-diacyl-sn-glycero-3-phospho-(1D-myo-inositol) + phosphate. It carries out the reaction a 1,2-diacyl-sn-glycero-3-phospho-(1D-myo-inositol-3,5-bisphosphate) + H2O = a 1,2-diacyl-sn-glycero-3-phospho-(1D-myo-inositol-5-phosphate) + phosphate. The enzyme catalyses 1,2-dioctanoyl-sn-glycero-3-phospho-(1-D-myo-inositol-3-phosphate) + H2O = 1,2-dioctanoyl-sn-glycero-3-phospho-(1D-myo-inositol) + phosphate. It catalyses the reaction 1,2-dioctanoyl-sn-glycero-3-phospho-(1D-myo-inositol-3,5-bisphosphate) + H2O = 1,2-dioctanoyl-sn-glycero-3-phospho-(1D-myo-inositol-5-phosphate) + phosphate. Its activity is regulated as follows. The phosphatidylinositol-3-phosphate phosphatase activity is inhibited by vanadate. Functionally, lipid phosphatase that specifically dephosphorylates the D-3 position of phosphatidylinositol 3-phosphate and phosphatidylinositol 3,5-bisphosphate, generating phosphatidylinositol and phosphatidylinositol 5-phosphate. Decreases the levels of phosphatidylinositol 3-phosphate, a phospholipid found in cell membranes where it acts as key regulator of both cell signaling and intracellular membrane traffic, in a subset of endosomal membranes to negatively regulate both endocytic recycling and trafficking and/or maturation of endosomes toward lysosomes. Through phosphatidylinositol 3-phosphate turnover in phagosome membranes regulates phagocytosis and phagosome maturation. By decreasing phosphatidylinositol 3-monophosphate (PI3P) levels in immune cells it can also regulate the innate immune response. Beside its lipid phosphatase activity, can also function as a molecular adapter to regulate midbody abscission during mitotic cytokinesis. Can also negatively regulate TGF-beta and BMP signaling through Smad proteins dephosphorylation and retention in endosomes. This is Phosphatidylinositol-3,5-bisphosphate 3-phosphatase MTMR4 from Homo sapiens (Human).